Consider the following 137-residue polypeptide: Holo-[acyl-carrier-protein] synthase (137 aa).

Mg(2+) contacts are provided by aspartate 8 and glutamate 61.

It belongs to the P-Pant transferase superfamily. AcpS family. Mg(2+) serves as cofactor.

Its subcellular location is the cytoplasm. The enzyme catalyses apo-[ACP] + CoA = holo-[ACP] + adenosine 3',5'-bisphosphate + H(+). Transfers the 4'-phosphopantetheine moiety from coenzyme A to a Ser of acyl-carrier-protein. This is Holo-[acyl-carrier-protein] synthase from Afipia carboxidovorans (strain ATCC 49405 / DSM 1227 / KCTC 32145 / OM5) (Oligotropha carboxidovorans).